A 60-amino-acid polypeptide reads, in one-letter code: MDHRLLEIIACPVCNGKLWYNQEKQELICKLDNLAFPLRDGIPVLLETEARVLTADESKS.

This sequence belongs to the UPF0434 family.

This Escherichia coli O139:H28 (strain E24377A / ETEC) protein is UPF0434 protein YcaR.